A 137-amino-acid polypeptide reads, in one-letter code: Small ribosomal subunit protein uS9 (137 aa).

A disordered region spans residues 103-137 (PPLKAEGYLTRDPRAKERKKYGLHKARKAPQYSKR). The span at 118 to 137 (KERKKYGLHKARKAPQYSKR) shows a compositional bias: basic residues.

Belongs to the universal ribosomal protein uS9 family.

This is Small ribosomal subunit protein uS9 from Crocosphaera subtropica (strain ATCC 51142 / BH68) (Cyanothece sp. (strain ATCC 51142)).